Reading from the N-terminus, the 330-residue chain is MESVAAESAPAPENEHSQETPESNSSVYTTFMKSHRCYDLIPTSSKLVVFDTSLQVKKAFFALVTNGVRAAPLWDSKKQSFVGMLTITDFINILHRYYKSALVQIYELEEHKIETWREVYLQDSFKPLVCISPNASLFDAVSSLIRNKIHRLPVIDPESGNTLYILTHKRILKFLKLFITEFPKPEFMSKSLEELQIGTYANIAMVRTTTPVYVALGIFVQHRVSALPVVDEKGRVVDIYSKFDVINLAAEKTYNNLDVSVTKALQHRSHYFEGVLKCYLHETLEAIINRLVEAEVHRLVVVDEHDVVKGIVSLSDILQALVLTGGEKKP.

The segment covering 1–12 has biased composition (low complexity); sequence MESVAAESAPAP. The disordered stretch occupies residues 1–25; it reads MESVAAESAPAPENEHSQETPESNS. CBS domains follow at residues 42–102, 124–186, and 197–259; these read PTSS…KSAL, SFKP…PKPE, and IGTY…NLDV. Residues Arg69, 84–89, Val129, 150–151, and Lys169 contribute to the ADP site; these read MLTITD and HR. Residues Arg69, 84–89, Val129, His150, 150–151, Lys169, Thr199, Ala204, 225–226, and 241–244 each bind AMP; these read MLTITD, HR, SA, and SKFD. Residues Arg69, 84–89, Val129, 150–151, Arg151, and Lys169 contribute to the ATP site; these read MLTITD and HR. The short motif at 137 to 158 is the AMPK pseudosubstrate element; it reads LFDAVSSLIRNKIHRLPVIDPE. 241–244 contacts ADP; the sequence is SKFD. 241–244 serves as a coordination point for ATP; that stretch reads SKFD. Ser260 is subject to Phosphoserine; by ULK1. Phosphothreonine; by ULK1 is present on Thr262. Residue Arg268 participates in ADP binding. Arg268 contacts AMP. Residue Arg268 coordinates ATP. Ser269 bears the Phosphoserine; by ULK1 mark. Residues 271–328 enclose the CBS 4 domain; sequence YFEGVLKCYLHETLEAIINRLVEAEVHRLVVVDEHDVVKGIVSLSDILQALVLTGGEK. Residues Leu276 and 297 to 298 contribute to the ADP site; that span reads HR. Residues Leu276, His297, 297–298, and 313–316 contribute to the AMP site; these read HR and SLSD. Residues Leu276 and 297-298 each bind ATP; that span reads HR.

It belongs to the 5'-AMP-activated protein kinase gamma subunit family. AMPK is a heterotrimer of an alpha catalytic subunit (PRKAA1 or PRKAA2), a beta (PRKAB1 or PRKAB2) and a gamma non-catalytic subunits (PRKAG1, PRKAG2 or PRKAG3). Interacts with FNIP1 and FNIP2. Phosphorylated by ULK1 and ULK2; leading to negatively regulate AMPK activity and suggesting the existence of a regulatory feedback loop between ULK1, ULK2 and AMPK. There is some ambiguity for a phosphosite: Ser-260/Thr-262. In terms of processing, glycosylated; O-GlcNAcylated by OGT, promoting the AMP-activated protein kinase (AMPK) activity. Highly expressed in heart and brain, also found in kidney, white adipose tissue, lung and spleen.

AMP/ATP-binding subunit of AMP-activated protein kinase (AMPK), an energy sensor protein kinase that plays a key role in regulating cellular energy metabolism. In response to reduction of intracellular ATP levels, AMPK activates energy-producing pathways and inhibits energy-consuming processes: inhibits protein, carbohydrate and lipid biosynthesis, as well as cell growth and proliferation. AMPK acts via direct phosphorylation of metabolic enzymes, and by longer-term effects via phosphorylation of transcription regulators. Also acts as a regulator of cellular polarity by remodeling the actin cytoskeleton; probably by indirectly activating myosin. Gamma non-catalytic subunit mediates binding to AMP, ADP and ATP, leading to activate or inhibit AMPK: AMP-binding results in allosteric activation of alpha catalytic subunit (PRKAA1 or PRKAA2) both by inducing phosphorylation and preventing dephosphorylation of catalytic subunits. ADP also stimulates phosphorylation, without stimulating already phosphorylated catalytic subunit. ATP promotes dephosphorylation of catalytic subunit, rendering the AMPK enzyme inactive. The chain is 5'-AMP-activated protein kinase subunit gamma-1 (Prkag1) from Rattus norvegicus (Rat).